Reading from the N-terminus, the 296-residue chain is SPbeta prophage-derived endonuclease YokF (296 aa).

Positions 1–19 (MKKVLLGFAAFTLSLSLAA) are cleaved as a signal peptide. A lipid anchor (N-palmitoyl cysteine) is attached at C20. C20 carries the S-diacylglycerol cysteine lipid modification. Residues 20–65 (CSSNDSEKVSTEKETPQASTDVEKKTEQKESTKEKTADKSKEKDKK) are disordered. Over residues 24-65 (DSEKVSTEKETPQASTDVEKKTEQKESTKEKTADKSKEKDKK) the composition is skewed to basic and acidic residues. Residues 66–199 (ELVDVTLDRA…KSEKLSIWSK (134 aa)) enclose the TNase-like domain. D79 serves as a coordination point for Ca(2+). R93 is an active-site residue. 2 residues coordinate Ca(2+): D98 and T99. Active-site residues include E101 and R144. Residues 218–296 (AVKKATTSKP…RDHDNYACER (79 aa)) are disordered. The segment covering 219–244 (VKKATTSKPAATQPTTPKASSETSTT) has biased composition (low complexity). Over residues 284–296 (KMDRDHDNYACER) the composition is skewed to basic and acidic residues.

Ca(2+) serves as cofactor. The cofactor is Cu(2+). It depends on Mn(2+) as a cofactor.

It localises to the cell membrane. Its activity is regulated as follows. Inhibited by aurintricalboxylic acid but not by Zn(2+), Mn(2+), Hg(2+), 2-mercaptoethanol and sodium citrate. Neither inhibited nor activated by ATP. Functionally, catalyzes the hydrolysis of supercoiled double and single strand DNA and RNA. Involved in chromosomal DNA degradation and cell death caused by thermal stress. This Bacillus subtilis (strain 168) protein is SPbeta prophage-derived endonuclease YokF (yokF).